The chain runs to 412 residues: UPF0754 membrane protein MAE_37850 (412 aa).

2 consecutive transmembrane segments (helical) span residues 3-23 (LPTL…GYFT) and 387-407 (IVNL…IILI).

This sequence belongs to the UPF0754 family.

It localises to the cell inner membrane. This Microcystis aeruginosa (strain NIES-843 / IAM M-2473) protein is UPF0754 membrane protein MAE_37850.